The primary structure comprises 478 residues: 3-isopropylmalate dehydratase large subunit (478 aa).

[4Fe-4S] cluster-binding residues include Cys355, Cys415, and Cys418.

This sequence belongs to the aconitase/IPM isomerase family. LeuC type 1 subfamily. As to quaternary structure, heterodimer of LeuC and LeuD. [4Fe-4S] cluster is required as a cofactor.

It catalyses the reaction (2R,3S)-3-isopropylmalate = (2S)-2-isopropylmalate. Its pathway is amino-acid biosynthesis; L-leucine biosynthesis; L-leucine from 3-methyl-2-oxobutanoate: step 2/4. In terms of biological role, catalyzes the isomerization between 2-isopropylmalate and 3-isopropylmalate, via the formation of 2-isopropylmaleate. The chain is 3-isopropylmalate dehydratase large subunit from Paracoccus denitrificans (strain Pd 1222).